The sequence spans 60 residues: Homeobox protein CHOX-CAD2 (60 aa).

A DNA-binding region (homeobox) is located at residues Lys-1–Ile-60.

It belongs to the Caudal homeobox family.

It localises to the nucleus. The protein is Homeobox protein CHOX-CAD2 (CHOX-CAD2) of Gallus gallus (Chicken).